We begin with the raw amino-acid sequence, 767 residues long: Slo-interacting protein 1 (767 aa).

Residues 202-280 (QQSSTDTNKG…SVTLLVSRIL (79 aa)) form the PDZ domain. Disordered stretches follow at residues 521–557 (GNAA…NPDE) and 744–767 (KEER…QQQQ). Positions 532–555 (NSSSAYNTGDSNNSASPHQNTTNP) are enriched in polar residues. The span at 744-755 (KEERKRHIERAR) shows a compositional bias: basic and acidic residues.

As to quaternary structure, interacts with Slo. As to expression, in embryos, it is expressed throughout the CNS and in several peripheral locations. Colocalizes with Slo.

Functionally, may selectively reduce calcium-activated potassium channel (Slo) currents by reducing the number of Slo channels in the plasma membrane. The sequence is that of Slo-interacting protein 1 (Slip1) from Drosophila melanogaster (Fruit fly).